The primary structure comprises 270 residues: MSAPCHCKHVDDSSSNDKLSALSPELQQEFKDPNHPANLICELCRLFYDNNWVTGTGGGISIRDVDGPNPNLVYIAPSGVQKERIQPWEMFLVELPDEKILRTPNDIPKELTKSYKYKPSACTPLFISCYTLRDAGACIHTHSQHAVMVTLFFENEKEFAISHIEQIKALPKLKYNDETGKIEKIGSMEYYDKLVIPIIENTPHEEDLTDSLQEAIKNYPGASAVLVRRHGIYVWGETVWKAKVYNEAIDYLLELAVKMKLAGIPLVKQE.

Cysteine 122 is a substrate binding site. The Zn(2+) site is built by histidine 140 and histidine 142. Glutamate 165 (proton donor/acceptor) is an active-site residue. Residue histidine 230 coordinates Zn(2+).

Belongs to the aldolase class II family. MtnB subfamily. Zn(2+) is required as a cofactor.

It is found in the cytoplasm. The enzyme catalyses 5-(methylsulfanyl)-D-ribulose 1-phosphate = 5-methylsulfanyl-2,3-dioxopentyl phosphate + H2O. It functions in the pathway amino-acid biosynthesis; L-methionine biosynthesis via salvage pathway; L-methionine from S-methyl-5-thio-alpha-D-ribose 1-phosphate: step 2/6. Catalyzes the dehydration of methylthioribulose-1-phosphate (MTRu-1-P) into 2,3-diketo-5-methylthiopentyl-1-phosphate (DK-MTP-1-P). This Candida albicans (strain SC5314 / ATCC MYA-2876) (Yeast) protein is Methylthioribulose-1-phosphate dehydratase.